We begin with the raw amino-acid sequence, 687 residues long: Fork-head transcriptional regulator 2 (687 aa).

Positions 1–23 (MSAQFITPKKRPHSPLDSNELLP) are disordered. The FHA domain maps to 82–146 (VSIGRNIELS…NGARIDGQKV (65 aa)). The segment covering 226-241 (SPSSISANSLQSNLDQ) has biased composition (polar residues). Positions 226 to 246 (SPSSISANSLQSNLDQDLSKE) are disordered. Positions 252–350 (KPPYSYATMI…SDGTISKTRR (99 aa)) form a DNA-binding region, fork-head. 3 disordered regions span residues 385-449 (AASI…RYTP), 472-569 (QLGR…IGLN), and 584-687 (PERG…MIDS). Positions 389–410 (PQQQKQQQQQQKRPPQQQNSQP) are enriched in low complexity. Residues 411 to 442 (HLSQPHYTIPSNPMQTNSMGYIPQSNIYNMSN) show a composition bias toward polar residues. The span at 472 to 490 (QLGRPQGQLGQPMMQPQQQ) shows a compositional bias: low complexity. Residues 491–540 (SYTSSNIKTEPSSPKRNPSISNNTPKMAKGTVSTESHSRSTSYTTTQLHE) show a composition bias toward polar residues. 2 stretches are compositionally biased toward low complexity: residues 542–563 (SNFNSSANDSTSTAPTASTTTN) and 589–624 (KGNPSGTNNNNNTNNTNTNTTNNNNGKNTAGGPNTN). Over residues 625-659 (QSSPAFWNFVQFSTPNGQSPVRKSSEEVGNNSPTL) the composition is skewed to polar residues. The Nuclear localization signal signature appears at 663 to 670 (IKREREND).

The protein localises to the nucleus. Functionally, transcription factor required for the morphogenesis of true hyphal as well as yeast cells. Contributes to virulence. The polypeptide is Fork-head transcriptional regulator 2 (FKH2) (Candida albicans (strain SC5314 / ATCC MYA-2876) (Yeast)).